Here is a 254-residue protein sequence, read N- to C-terminus: 5-oxoprolinase subunit A (254 aa).

Belongs to the LamB/PxpA family. Forms a complex composed of PxpA, PxpB and PxpC.

It catalyses the reaction 5-oxo-L-proline + ATP + 2 H2O = L-glutamate + ADP + phosphate + H(+). Catalyzes the cleavage of 5-oxoproline to form L-glutamate coupled to the hydrolysis of ATP to ADP and inorganic phosphate. The polypeptide is 5-oxoprolinase subunit A (Burkholderia thailandensis (strain ATCC 700388 / DSM 13276 / CCUG 48851 / CIP 106301 / E264)).